The chain runs to 298 residues: Troponin T, cardiac muscle (298 aa).

Residues 1–70 (MSDIEEVVEE…EAKEAEDGPM (70 aa)) are compositionally biased toward acidic residues. 2 disordered regions span residues 1–95 (MSDI…GERV) and 120–219 (FENR…EKKK). Serine 2 carries the post-translational modification N-acetylserine. Serine 2 bears the Phosphoserine; by CK2 mark. Composition is skewed to basic and acidic residues over residues 120-183 (FENR…DEAR) and 203-219 (QTER…EKKK). Threonine 204 is modified (phosphothreonine; by PKC/PRKCA). The residue at position 208 (serine 208) is a Phosphoserine; by PKC/PRKCA. Threonine 213 bears the Phosphothreonine; by PKC/PRKCA and RAF1 mark. Position 294 is a phosphothreonine; by PKC/PRKCA (threonine 294).

The protein belongs to the troponin T family. Post-translationally, phosphorylation at Thr-213 by PRKCA induces significant reduction in myofilament calcium sensitivity and actomyosin ATPase activity. As to expression, heart. The fetal heart shows a greater expression in the atrium than in the ventricle, while the adult heart shows a greater expression in the ventricle than in the atrium. Isoform 6 predominates in normal adult heart. Isoforms 1, 7 and 8 are expressed in fetal heart. Isoform 7 is also expressed in failing adult heart.

Functionally, troponin T is the tropomyosin-binding subunit of troponin, the thin filament regulatory complex which confers calcium-sensitivity to striated muscle actomyosin ATPase activity. The polypeptide is Troponin T, cardiac muscle (TNNT2) (Homo sapiens (Human)).